Here is a 307-residue protein sequence, read N- to C-terminus: Oxygen-dependent coproporphyrinogen-III oxidase (307 aa).

Serine 99 contacts substrate. Positions 103 and 113 each coordinate a divalent metal cation. The active-site Proton donor is the histidine 113. 115–117 (NVR) serves as a coordination point for substrate. A divalent metal cation is bound by residues histidine 152 and histidine 182. Positions 247–282 (YVEFNLVFDRGTLFGLQSGGRTESILMSMPPVANWR) are important for dimerization. Substrate is bound at residue 265–267 (GGR).

Belongs to the aerobic coproporphyrinogen-III oxidase family. As to quaternary structure, homodimer. A divalent metal cation serves as cofactor.

It localises to the cytoplasm. The enzyme catalyses coproporphyrinogen III + O2 + 2 H(+) = protoporphyrinogen IX + 2 CO2 + 2 H2O. It functions in the pathway porphyrin-containing compound metabolism; protoporphyrin-IX biosynthesis; protoporphyrinogen-IX from coproporphyrinogen-III (O2 route): step 1/1. In terms of biological role, involved in the heme biosynthesis. Catalyzes the aerobic oxidative decarboxylation of propionate groups of rings A and B of coproporphyrinogen-III to yield the vinyl groups in protoporphyrinogen-IX. This chain is Oxygen-dependent coproporphyrinogen-III oxidase, found in Burkholderia cenocepacia (strain ATCC BAA-245 / DSM 16553 / LMG 16656 / NCTC 13227 / J2315 / CF5610) (Burkholderia cepacia (strain J2315)).